Reading from the N-terminus, the 101-residue chain is Protein S100-A3 (101 aa).

An N-acetylalanine modification is found at A2. EF-hand domains lie at 12–47 (IVCT…TWTP) and 50–85 (FREC…LCLY). Residues K28 and E33 each coordinate Ca(2+). C30 and C68 form a disulfide bridge. R51 carries the citrulline; by PAD3 modification. Ca(2+) is bound by residues D63, N65, D67, E69, and E74. A disulfide bridge links C81 with C99. 4 residues coordinate Zn(2+): C83, C86, H87, and C93.

Belongs to the S-100 family. In terms of assembly, homodimer and homotetramer for the citrullinated form. More than half of the arginine residues undergo citrullination by PAD1 and PAD2. Arg-51 is specifically citrullinated by PAD3 and promotes tetramerization. Skin specific, specifically expressed at the inner endocuticle of hair fibers.

The protein localises to the cytoplasm. Functionally, binds both calcium and zinc. May be involved in calcium-dependent cuticle cell differentiation, hair shaft and hair cuticular barrier formation. The protein is Protein S100-A3 (S100A3) of Homo sapiens (Human).